Consider the following 717-residue polypeptide: Fatty acid oxidation complex subunit alpha (717 aa).

The segment at 1–190 is enoyl-CoA hydratase/isomerase; it reads MIHAGNAITV…KDGAVDAVVA (190 aa). A substrate-binding site is contributed by D298. The 3-hydroxyacyl-CoA dehydrogenase stretch occupies residues 313-717; that stretch reads HPVNQAAVLG…MAANNKKFYG (405 aa). Residues M326, D345, 402–404, K409, and S431 contribute to the NAD(+) site; that span reads VTE. H452 functions as the For 3-hydroxyacyl-CoA dehydrogenase activity in the catalytic mechanism. NAD(+) is bound at residue N455. A substrate-binding site is contributed by N502.

This sequence in the N-terminal section; belongs to the enoyl-CoA hydratase/isomerase family. In the C-terminal section; belongs to the 3-hydroxyacyl-CoA dehydrogenase family. Heterotetramer of two alpha chains (FadB) and two beta chains (FadA).

It carries out the reaction a (3S)-3-hydroxyacyl-CoA + NAD(+) = a 3-oxoacyl-CoA + NADH + H(+). The enzyme catalyses a (3S)-3-hydroxyacyl-CoA = a (2E)-enoyl-CoA + H2O. The catalysed reaction is a 4-saturated-(3S)-3-hydroxyacyl-CoA = a (3E)-enoyl-CoA + H2O. It catalyses the reaction (3S)-3-hydroxybutanoyl-CoA = (3R)-3-hydroxybutanoyl-CoA. It carries out the reaction a (3Z)-enoyl-CoA = a 4-saturated (2E)-enoyl-CoA. The enzyme catalyses a (3E)-enoyl-CoA = a 4-saturated (2E)-enoyl-CoA. It functions in the pathway lipid metabolism; fatty acid beta-oxidation. Involved in the aerobic and anaerobic degradation of long-chain fatty acids via beta-oxidation cycle. Catalyzes the formation of 3-oxoacyl-CoA from enoyl-CoA via L-3-hydroxyacyl-CoA. It can also use D-3-hydroxyacyl-CoA and cis-3-enoyl-CoA as substrate. The chain is Fatty acid oxidation complex subunit alpha from Acinetobacter baumannii (strain SDF).